The primary structure comprises 320 residues: Probable L-ascorbate peroxidase 5, chloroplastic (320 aa).

A chloroplast-targeting transit peptide spans 1 to 42 (MAVVHRILRRGLSAASPLPSLRGLLLVSPQELGRRPASSSSS). Residue His-80 is the Proton acceptor of the active site. His-209 is a heme b binding site. Residue Thr-210 coordinates K(+). Residues 213–241 (RARPERSGWGKPETKYTENGPGAPGGQSW) are disordered. Basic and acidic residues predominate over residues 214-228 (ARPERSGWGKPETKY). Residues Thr-242 and Asp-249 each contribute to the K(+) site.

It belongs to the peroxidase family. Ascorbate peroxidase subfamily. The cofactor is heme b. Expressed in leaves, stems and flowers.

The protein resides in the plastid. It is found in the chloroplast stroma. The catalysed reaction is L-ascorbate + H2O2 = L-dehydroascorbate + 2 H2O. Functionally, plays a key role in hydrogen peroxide removal. This Oryza sativa subsp. japonica (Rice) protein is Probable L-ascorbate peroxidase 5, chloroplastic.